Reading from the N-terminus, the 381-residue chain is Cytochrome b (381 aa).

The next 4 helical transmembrane spans lie at 33 to 53, 77 to 98, 113 to 133, and 178 to 198; these read FGSL…FLAM, WLLR…FLHV, WNIG…GYVL, and FFAF…VHLL. Heme b is bound by residues His-83 and His-97. Heme b-binding residues include His-182 and His-196. His-201 contributes to the a ubiquinone binding site. A run of 4 helical transmembrane segments spans residues 226–246, 288–308, 320–340, and 347–367; these read IKDA…GLFS, LGGV…PLLH, IFQT…WIGG, and FIII…ALMP.

It belongs to the cytochrome b family. The cytochrome bc1 complex contains 11 subunits: 3 respiratory subunits (MT-CYB, CYC1 and UQCRFS1), 2 core proteins (UQCRC1 and UQCRC2) and 6 low-molecular weight proteins (UQCRH/QCR6, UQCRB/QCR7, UQCRQ/QCR8, UQCR10/QCR9, UQCR11/QCR10 and a cleavage product of UQCRFS1). This cytochrome bc1 complex then forms a dimer. It depends on heme b as a cofactor.

The protein resides in the mitochondrion inner membrane. In terms of biological role, component of the ubiquinol-cytochrome c reductase complex (complex III or cytochrome b-c1 complex) that is part of the mitochondrial respiratory chain. The b-c1 complex mediates electron transfer from ubiquinol to cytochrome c. Contributes to the generation of a proton gradient across the mitochondrial membrane that is then used for ATP synthesis. This is Cytochrome b (MT-CYB) from Dasykaluta rosamondae (Little red marsupial mouse).